The sequence spans 506 residues: Maturase K (506 aa).

Belongs to the intron maturase 2 family. MatK subfamily.

It localises to the plastid. The protein resides in the chloroplast. Its function is as follows. Usually encoded in the trnK tRNA gene intron. Probably assists in splicing its own and other chloroplast group II introns. In Austrosteenisia blackii (Blood vine), this protein is Maturase K.